Reading from the N-terminus, the 114-residue chain is MSALSLVILGLLMAVPPASCQQGLGNLQPWMQGLIAVAVFLVLVAIAFAINHFWCQEEREPMNMVMTTGNKADGILIGTEGKYSSMAASFRSNEHENAYENTSEEEGRVHSTPM.

Residues 1-28 (MSALSLVILGLLMAVPPASCQQGLGNLQ) lie on the Extracellular side of the membrane. A helical transmembrane segment spans residues 29 to 51 (PWMQGLIAVAVFLVLVAIAFAIN). The Cytoplasmic segment spans residues 52 to 114 (HFWCQEEREP…EEGRVHSTPM (63 aa)). Residue serine 85 is modified to Phosphoserine. The interval 92–114 (SNEHENAYENTSEEEGRVHSTPM) is disordered. The span at 105-114 (EEGRVHSTPM) shows a compositional bias: basic and acidic residues.

It belongs to the PDZK1-interacting protein 1/SMIM24 family. As to quaternary structure, forms a heterodimer (via N-terminal transmembrane helix) with SLC5A2/SGLT2 (via TM13); this interaction enhances SLC5A2 transporter activity. Interacts with PDZK1.

It localises to the apical cell membrane. Its function is as follows. Auxiliary protein of electrogenic Na(+)-coupled sugar symporter SLC5A2/SGLT2 and SLC5A1/SGLT1. Essential for the transporter activity of SLC5A2/SGLT2 but not SLC5A1/SGLT1. This chain is PDZK1-interacting protein 1, found in Sus scrofa (Pig).